The following is an 847-amino-acid chain: Bifunctional lysine-specific demethylase and histidyl-hydroxylase NO66 (847 aa).

The segment covering 1-24 (MEKVTNSAAAKPQGNNKKQESAYN) has biased composition (polar residues). Disordered regions lie at residues 1–45 (MEKV…SDLL), 203–223 (AEAD…KESV), and 254–320 (AEKE…ERKQ). Positions 203–214 (AEADAKNNDTKK) are enriched in basic and acidic residues. A compositionally biased stretch (low complexity) spans 268–278 (STSSKEAAAAK). Basic and acidic residues predominate over residues 279–288 (TADHERRLLA). Over residues 304–314 (AMESVATQGAS) the composition is skewed to polar residues. At Ser323 the chain carries Phosphoserine. Phosphothreonine is present on Thr329. The residue at position 330 (Ser330) is a Phosphoserine. Residues 377–401 (KAPEEGNNNNDEKEMSTETSETHKT) form a disordered region. Residues 386–401 (NDEKEMSTETSETHKT) show a composition bias toward basic and acidic residues. The region spanning 499-644 (CSIRLLNPSA…NLLETLMPMV (146 aa)) is the JmjC domain. Fe cation contacts are provided by His545, Asp547, and His610.

This sequence belongs to the ROX family. NO66 subfamily. Requires Fe(2+) as cofactor.

The protein resides in the nucleus. It catalyses the reaction N(6),N(6)-dimethyl-L-lysyl(36)-[histone H3] + 2 2-oxoglutarate + 2 O2 = L-lysyl(36)-[histone H3] + 2 formaldehyde + 2 succinate + 2 CO2. In terms of biological role, oxygenase that can act as both a histone lysine demethylase and a ribosomal histidine hydroxylase. Specifically demethylates 'Lys-4' (H3K4me) and 'Lys-36' (H3K36me) of histone H3, thereby playing a central role in histone code. The sequence is that of Bifunctional lysine-specific demethylase and histidyl-hydroxylase NO66 from Drosophila simulans (Fruit fly).